Reading from the N-terminus, the 328-residue chain is L-serine dehydratase/L-threonine deaminase (328 aa).

Lys41 bears the N6-(pyridoxal phosphate)lysine mark. Pro128 serves as a coordination point for pyridoxal 5'-phosphate.

This sequence belongs to the serine/threonine dehydratase family. As to quaternary structure, homodimer. Requires pyridoxal 5'-phosphate as cofactor. Predominantly expressed in the perivenous regions of the liver.

Its subcellular location is the cytoplasm. The enzyme catalyses L-serine = pyruvate + NH4(+). The catalysed reaction is L-threonine = 2-oxobutanoate + NH4(+). Its pathway is carbohydrate biosynthesis; gluconeogenesis. In terms of biological role, catalyzes the pyridoxal-phosphate-dependent dehydrative deamination of L-threonine and L-serine to ammonia and alpha-ketobutyrate and pyruvate, respectively. This is L-serine dehydratase/L-threonine deaminase (SDS) from Homo sapiens (Human).